Consider the following 303-residue polypeptide: Coenzyme PQQ synthesis protein B (303 aa).

Belongs to the PqqB family.

It functions in the pathway cofactor biosynthesis; pyrroloquinoline quinone biosynthesis. May be involved in the transport of PQQ or its precursor to the periplasm. The sequence is that of Coenzyme PQQ synthesis protein B from Acinetobacter baumannii (strain AYE).